Here is a 462-residue protein sequence, read N- to C-terminus: Anthranilate synthase component 1 (462 aa).

L-tryptophan-binding positions include Ser46 and Pro243–Met245. Gly278–Thr279 provides a ligand contact to chorismate. Glu305 is a Mg(2+) binding site. Chorismate contacts are provided by residues Tyr394, Arg414, Ser428–Gly430, and Gly430. A Mg(2+)-binding site is contributed by Glu444.

It belongs to the anthranilate synthase component I family. In terms of assembly, heterotetramer consisting of two non-identical subunits: a beta subunit (TrpG) and a large alpha subunit (TrpE). Mg(2+) is required as a cofactor.

It carries out the reaction chorismate + L-glutamine = anthranilate + pyruvate + L-glutamate + H(+). Its pathway is amino-acid biosynthesis; L-tryptophan biosynthesis; L-tryptophan from chorismate: step 1/5. Its activity is regulated as follows. Feedback inhibited by tryptophan. Its function is as follows. Part of a heterotetrameric complex that catalyzes the two-step biosynthesis of anthranilate, an intermediate in the biosynthesis of L-tryptophan. In the first step, the glutamine-binding beta subunit (TrpG) of anthranilate synthase (AS) provides the glutamine amidotransferase activity which generates ammonia as a substrate that, along with chorismate, is used in the second step, catalyzed by the large alpha subunit of AS (TrpE) to produce anthranilate. In the absence of TrpG, TrpE can synthesize anthranilate directly from chorismate and high concentrations of ammonia. The sequence is that of Anthranilate synthase component 1 (trpE) from Leptospira biflexa.